We begin with the raw amino-acid sequence, 227 residues long: Uracil-DNA glycosylase (227 aa).

Catalysis depends on Asp-64, which acts as the Proton acceptor.

Belongs to the uracil-DNA glycosylase (UDG) superfamily. UNG family.

The protein localises to the cytoplasm. It catalyses the reaction Hydrolyzes single-stranded DNA or mismatched double-stranded DNA and polynucleotides, releasing free uracil.. Excises uracil residues from the DNA which can arise as a result of misincorporation of dUMP residues by DNA polymerase or due to deamination of cytosine. The polypeptide is Uracil-DNA glycosylase (Serratia proteamaculans (strain 568)).